We begin with the raw amino-acid sequence, 67 residues long: Large ribosomal subunit protein bL35 (67 aa).

The segment at 22–45 (GKIKRWKSGGAHYNTKKSSKRKRH) is disordered. Positions 35–45 (NTKKSSKRKRH) are enriched in basic residues.

This sequence belongs to the bacterial ribosomal protein bL35 family.

This chain is Large ribosomal subunit protein bL35, found in Aquifex aeolicus (strain VF5).